Here is a 131-residue protein sequence, read N- to C-terminus: Sec-independent protein translocase protein TatB (131 aa).

A helical transmembrane segment spans residues 2–22 (FANIGWWEMLVLVMVGLVVLG). Residues 90-131 (DSLFTGDFDRPTPKKPDAAGSAGPDATEQIGAGPIPFDSDAT) form a disordered region. The span at 96 to 106 (DFDRPTPKKPD) shows a compositional bias: basic and acidic residues.

The protein belongs to the TatB family. The Tat system comprises two distinct complexes: a TatABC complex, containing multiple copies of TatA, TatB and TatC subunits, and a separate TatA complex, containing only TatA subunits. Substrates initially bind to the TatABC complex, which probably triggers association of the separate TatA complex to form the active translocon.

Its subcellular location is the cell membrane. Functionally, part of the twin-arginine translocation (Tat) system that transports large folded proteins containing a characteristic twin-arginine motif in their signal peptide across membranes. Together with TatC, TatB is part of a receptor directly interacting with Tat signal peptides. TatB may form an oligomeric binding site that transiently accommodates folded Tat precursor proteins before their translocation. This Mycobacterium tuberculosis (strain ATCC 25177 / H37Ra) protein is Sec-independent protein translocase protein TatB.